A 94-amino-acid polypeptide reads, in one-letter code: Large ribosomal subunit protein bL27 (94 aa).

Positions M1 to F9 are excised as a propeptide.

The protein belongs to the bacterial ribosomal protein bL27 family. Post-translationally, the N-terminus is cleaved by ribosomal processing cysteine protease Prp.

The sequence is that of Large ribosomal subunit protein bL27 from Staphylococcus epidermidis (strain ATCC 35984 / DSM 28319 / BCRC 17069 / CCUG 31568 / BM 3577 / RP62A).